We begin with the raw amino-acid sequence, 134 residues long: Probable 4-amino-4-deoxy-L-arabinose-phosphoundecaprenol flippase subunit ArnF (134 aa).

Residues 1-5 (MNRRR) are Cytoplasmic-facing. A helical membrane pass occupies residues 6-26 (GILFALASVLLVSVAQLSMRW). The Periplasmic portion of the chain corresponds to 27–45 (SMTRLPRPDQWLSVPSVDS). The chain crosses the membrane as a helical span at residues 46–66 (VALAVVLAAIFAYALSMLCWL). At 67-77 (AALRDLPLGRA) the chain is on the cytoplasmic side. The chain crosses the membrane as a helical span at residues 78-98 (YSLLSISYALVYLLAASLPLF). Residues 99 to 101 (NES) lie on the Periplasmic side of the membrane. A helical membrane pass occupies residues 102-122 (FSFSKSLGVALVMLGVITINT). The Cytoplasmic portion of the chain corresponds to 123 to 134 (RPARAPELRSSP).

This sequence belongs to the ArnF family. As to quaternary structure, heterodimer of ArnE and ArnF.

The protein resides in the cell inner membrane. The protein operates within bacterial outer membrane biogenesis; lipopolysaccharide biosynthesis. In terms of biological role, translocates 4-amino-4-deoxy-L-arabinose-phosphoundecaprenol (alpha-L-Ara4N-phosphoundecaprenol) from the cytoplasmic to the periplasmic side of the inner membrane. In Pseudomonas fluorescens (strain Pf0-1), this protein is Probable 4-amino-4-deoxy-L-arabinose-phosphoundecaprenol flippase subunit ArnF.